The following is a 145-amino-acid chain: D-aminoacyl-tRNA deacylase (145 aa).

Positions 137-138 (GP) match the Gly-cisPro motif, important for rejection of L-amino acids motif.

The protein belongs to the DTD family. As to quaternary structure, homodimer.

It localises to the cytoplasm. It carries out the reaction glycyl-tRNA(Ala) + H2O = tRNA(Ala) + glycine + H(+). It catalyses the reaction a D-aminoacyl-tRNA + H2O = a tRNA + a D-alpha-amino acid + H(+). Functionally, an aminoacyl-tRNA editing enzyme that deacylates mischarged D-aminoacyl-tRNAs. Also deacylates mischarged glycyl-tRNA(Ala), protecting cells against glycine mischarging by AlaRS. Acts via tRNA-based rather than protein-based catalysis; rejects L-amino acids rather than detecting D-amino acids in the active site. By recycling D-aminoacyl-tRNA to D-amino acids and free tRNA molecules, this enzyme counteracts the toxicity associated with the formation of D-aminoacyl-tRNA entities in vivo and helps enforce protein L-homochirality. This Colwellia psychrerythraea (strain 34H / ATCC BAA-681) (Vibrio psychroerythus) protein is D-aminoacyl-tRNA deacylase.